The sequence spans 1558 residues: Calmodulin-regulated spectrin-associated protein 1-B (1558 aa).

The Calponin-homology (CH) domain maps to 231-346; it reads WYWKLVPVRY…FIAELFWWFE (116 aa). Composition is skewed to polar residues over residues 400–417, 440–450, and 504–516; these read VQNSPEVCNSNKGSSGFS, ACRNRSNSLTQ, and ASTVTPKHQSHPG. 7 disordered regions span residues 400–464, 504–523, 551–585, 602–675, 737–790, 803–850, and 943–968; these read VQNS…SDKR, ASTVTPKHQSHPGQGSVRRI, NDITLTNSEDTERQGVTPGAKSIWGRQEDASSDSR, AKEK…APGQ, TKEL…VASG, QRFG…QNKD, and DRSKEAEEPEKASCEWAGGGTVSSSP. Positions 602 to 620 are enriched in basic and acidic residues; the sequence is AKEKSISLNKEEESGEGRQ. Residues 643 to 658 show a composition bias toward polar residues; the sequence is QTLNRTFTPNTSSEFE. The span at 737–772 shows a compositional bias: basic and acidic residues; that stretch reads TKELHPDKKQHFEEEVESAKLREDMNVKEHEDKDGG. Low complexity-rich tracts occupy residues 776 to 790 and 812 to 822; these read SSPGQQSQVSSVASG and RSSTSSSQRTT. Positions 849 to 887 form a coiled coil; the sequence is KDNANMLASELVQLHMQLEEKRRAIESQKKKMEILTARQ. Positions 943–955 are enriched in basic and acidic residues; sequence DRSKEAEEPEKAS. Positions 971-1004 form a coiled coil; it reads VEEEVDLNECNRSIELLNEAIGSIQQQMMQLSLQ. Disordered stretches follow at residues 1041–1131, 1257–1293, 1305–1344, and 1360–1414; these read FVEP…TFHL, LRKQQLEAESEQKRDETRRKAEEERIRKEEEKARREL, ELCEEQEQPQPKPKTKPKKQRLKSVVKEEPSIDPLPKCPA, and LASV…ITST. Low complexity predominate over residues 1080–1090; sequence SSTPTPTDSPS. The span at 1106 to 1115 shows a compositional bias: polar residues; it reads DFVQSSVRSE. Residues 1243-1303 adopt a coiled-coil conformation; the sequence is AFLLKQQRKA…IKQEYLRKKQ (61 aa). The segment covering 1317-1328 has biased composition (basic residues); that stretch reads PKTKPKKQRLKS. The CKK domain maps to 1421-1555; that stretch reads GPKLFKEPSA…QAKRPAGPKK (135 aa).

This sequence belongs to the CAMSAP1 family.

Its subcellular location is the cytoplasm. The protein localises to the cytoskeleton. Functionally, key microtubule-organizing protein that specifically binds the minus-end of non-centrosomal microtubules and regulates their dynamics and organization. Specifically recognizes growing microtubule minus-ends and stabilizes microtubules. Acts on free microtubule minus-ends that are not capped by microtubule-nucleating proteins or other factors and protects microtubule minus-ends from depolymerization. In contrast to camsap2 and camsap3, tracks along the growing tips of minus-end microtubules without significantly affecting the polymerization rate: binds at the very tip of the microtubules minus-end and acts as a minus-end tracking protein (-TIP) that dissociates from microtubules after allowing tubulin incorporation. Through interaction with spectrin may regulate neurite outgrowth. The sequence is that of Calmodulin-regulated spectrin-associated protein 1-B (camsap1b) from Danio rerio (Zebrafish).